A 745-amino-acid chain; its full sequence is MSVLEECCYLPVVSAQQLPEPSDEGYLEDQLEIFGILALNKKLTRAECCLTQLDTLMAPELTFYTCRAARRLLLGLVHVPCVSVGYMPPGMCLHKGSSFSGAGLVFNGYQYYTTNQLTTDTFIPGIRSMEETDPVLDKNFTWRIIYFPKLLTTRVSWTLMFQIISRYVNMYELDECVSLFCNSLNPHLKQVCTYNYSLLTYHLKNPSLQRWPHSSKTVGKTSEEFLLINFLLHWPSSTCLAQLRAKVLKGVKQFPGILQYLSALPVSKAVTVQGLEILKYIECIGLLFPQWAPVLLKRTPKKFTCVITVVNNHTNSSIWLQFPESGAMLRTALCMAVAKHICREKELISPGKQQLSLARALVANFEKMQYAPKDFPIILYPTEIYRPMPVDDQPASDIKNSFNALTHISINSFKVNVFNTNMVINTNITCLQAPCCYSQIVNVPKLVNNFVIKKYSVKEPAFTVSIFYSEDFNLKAAINVNISGDIINFLLAMNTLKCFLPVTDIFPASMANWNSTFDLHGLENQHLVRSGRRDVFWTTNFPSVVSSNEGYNVSWFKAATATVSKIHGSDLTKQVQGEIRRLIGHRHARISFCKNKLFATLESRNCAQIQAAHKRFLECLYECCSWFRANTNALTQLVQCGAFDFSKRIIAHSKSRHECALCGYKVCNSIPKVIINHKKTRLDDCGRNANFLSYLHRGAPHMINTKAKLFKHICRRASLRSYHFAGCAKAKEWSKALRLAHQMPS.

This sequence belongs to the herpesviridae UL87 family.

This is an uncharacterized protein from Connochaetes taurinus (Blue wildebeest).